A 253-amino-acid chain; its full sequence is uncharacterized protein (253 aa).

S-adenosyl-L-methionine contacts are provided by residues G45, 66–67 (DA), 94–95 (AE), and R110.

Belongs to the methyltransferase superfamily.

This is an uncharacterized protein from Bacillus subtilis (strain 168).